Here is a 451-residue protein sequence, read N- to C-terminus: Cobyrinate a,c-diamide synthase (451 aa).

A GATase cobBQ-type domain is found at 246–437; that stretch reads KIGVAYDEVF…VHTHVAAMPN (192 aa). C328 (nucleophile) is an active-site residue.

This sequence belongs to the CobB/CbiA family. Mg(2+) serves as cofactor.

The catalysed reaction is cob(II)yrinate + 2 L-glutamine + 2 ATP + 2 H2O = cob(II)yrinate a,c diamide + 2 L-glutamate + 2 ADP + 2 phosphate + 2 H(+). The enzyme catalyses Ni-sirohydrochlorin + 2 L-glutamine + 2 ATP + 2 H2O = Ni-sirohydrochlorin a,c-diamide + 2 L-glutamate + 2 ADP + 2 phosphate + 2 H(+). It participates in cofactor biosynthesis; adenosylcobalamin biosynthesis; cob(II)yrinate a,c-diamide from sirohydrochlorin (anaerobic route): step 10/10. Its function is as follows. Catalyzes the ATP-dependent amidation of the two carboxylate groups at positions a and c of cobyrinate, using either L-glutamine or ammonia as the nitrogen source. Involved in the biosynthesis of the unique nickel-containing tetrapyrrole coenzyme F430, the prosthetic group of methyl-coenzyme M reductase (MCR), which plays a key role in methanogenesis and anaerobic methane oxidation. Catalyzes the ATP-dependent amidation of the two carboxylate groups at positions a and c of Ni-sirohydrochlorin, using L-glutamine or ammonia as the nitrogen source. The sequence is that of Cobyrinate a,c-diamide synthase from Methanobrevibacter smithii (strain ATCC 35061 / DSM 861 / OCM 144 / PS).